Here is a 197-residue protein sequence, read N- to C-terminus: uncharacterized protein (197 aa).

Positions 1-31 are disordered; that stretch reads MMHFRKKSSISNTSDHDGANRASDVKISEDD. S11 and S23 each carry phosphoserine. The segment covering 14–31 has biased composition (basic and acidic residues); that stretch reads SDHDGANRASDVKISEDD. Residues K26 and K32 each participate in a glycyl lysine isopeptide (Lys-Gly) (interchain with G-Cter in ubiquitin) cross-link. A disordered region spans residues 157–197; it reads VGGASSQMYGEQAVYQPQQHVQTEEKQKKKKKGLFGRMKKK. Over residues 158–177 the composition is skewed to polar residues; the sequence is GGASSQMYGEQAVYQPQQHV. The span at 184 to 197 shows a compositional bias: basic residues; that stretch reads KKKKKGLFGRMKKK.

The protein to yeast YGR273c.

This is an uncharacterized protein from Saccharomyces cerevisiae (strain ATCC 204508 / S288c) (Baker's yeast).